The chain runs to 75 residues: Exodeoxyribonuclease 7 small subunit (75 aa).

This sequence belongs to the XseB family. In terms of assembly, heterooligomer composed of large and small subunits.

Its subcellular location is the cytoplasm. It carries out the reaction Exonucleolytic cleavage in either 5'- to 3'- or 3'- to 5'-direction to yield nucleoside 5'-phosphates.. Bidirectionally degrades single-stranded DNA into large acid-insoluble oligonucleotides, which are then degraded further into small acid-soluble oligonucleotides. The chain is Exodeoxyribonuclease 7 small subunit from Geobacter sp. (strain M21).